We begin with the raw amino-acid sequence, 39 residues long: MTIDRTYPIFTVRWLAIHGLAVPTVFFLGSISAMQFIQR.

Residues 14–30 form a helical membrane-spanning segment; that stretch reads WLAIHGLAVPTVFFLGS. Residue histidine 18 coordinates heme.

In terms of assembly, heterodimer of an alpha subunit and a beta subunit. PSII is composed of 1 copy each of membrane proteins PsbA, PsbB, PsbC, PsbD, PsbE, PsbF, PsbH, PsbI, PsbJ, PsbK, PsbL, PsbM, PsbT, PsbX, PsbY, PsbZ, Psb30/Ycf12, at least 3 peripheral proteins of the oxygen-evolving complex and a large number of cofactors. It forms dimeric complexes. Requires heme b as cofactor. Post-translationally, the N-terminus is blocked.

It is found in the plastid. Its subcellular location is the chloroplast thylakoid membrane. This b-type cytochrome is tightly associated with the reaction center of photosystem II (PSII). PSII is a light-driven water:plastoquinone oxidoreductase that uses light energy to abstract electrons from H(2)O, generating O(2) and a proton gradient subsequently used for ATP formation. It consists of a core antenna complex that captures photons, and an electron transfer chain that converts photonic excitation into a charge separation. The polypeptide is Cytochrome b559 subunit beta (Spinacia oleracea (Spinach)).